The primary structure comprises 661 residues: UvrABC system protein B (661 aa).

The Helicase ATP-binding domain occupies 25–182 (KGLNNKKRSQ…NDLVNLQYER (158 aa)). 38–45 (GITGSGKT) provides a ligand contact to ATP. Residues 91-114 (YYDYYQPEAYIPKTDVFIEKDSSI) carry the Beta-hairpin motif. Residues 430 to 592 (QVEDLVGEIQ…IIPKTINRTI (163 aa)) enclose the Helicase C-terminal domain. The 36-residue stretch at 621 to 656 (KAHIDKLRKEMLKAASNLEFEQAAKLRDQLKTLEEA) folds into the UVR domain.

This sequence belongs to the UvrB family. As to quaternary structure, forms a heterotetramer with UvrA during the search for lesions. Interacts with UvrC in an incision complex.

Its subcellular location is the cytoplasm. Functionally, the UvrABC repair system catalyzes the recognition and processing of DNA lesions. A damage recognition complex composed of 2 UvrA and 2 UvrB subunits scans DNA for abnormalities. Upon binding of the UvrA(2)B(2) complex to a putative damaged site, the DNA wraps around one UvrB monomer. DNA wrap is dependent on ATP binding by UvrB and probably causes local melting of the DNA helix, facilitating insertion of UvrB beta-hairpin between the DNA strands. Then UvrB probes one DNA strand for the presence of a lesion. If a lesion is found the UvrA subunits dissociate and the UvrB-DNA preincision complex is formed. This complex is subsequently bound by UvrC and the second UvrB is released. If no lesion is found, the DNA wraps around the other UvrB subunit that will check the other stand for damage. This chain is UvrABC system protein B, found in Rickettsia bellii (strain RML369-C).